We begin with the raw amino-acid sequence, 792 residues long: DNA ligase (792 aa).

Residues 42–46, 91–92, and E124 contribute to the NAD(+) site; these read DAEYD and SL. The active-site N6-AMP-lysine intermediate is the K126. R147, E189, K306, and K330 together coordinate NAD(+). Zn(2+)-binding residues include C424, C426, C448, and C454. A BRCT domain is found at 714 to 792; the sequence is KTDTAVAGKT…EDEWLAMVGG (79 aa).

The protein belongs to the NAD-dependent DNA ligase family. LigA subfamily. Mg(2+) is required as a cofactor. Mn(2+) serves as cofactor.

It carries out the reaction NAD(+) + (deoxyribonucleotide)n-3'-hydroxyl + 5'-phospho-(deoxyribonucleotide)m = (deoxyribonucleotide)n+m + AMP + beta-nicotinamide D-nucleotide.. In terms of biological role, DNA ligase that catalyzes the formation of phosphodiester linkages between 5'-phosphoryl and 3'-hydroxyl groups in double-stranded DNA using NAD as a coenzyme and as the energy source for the reaction. It is essential for DNA replication and repair of damaged DNA. In Caulobacter sp. (strain K31), this protein is DNA ligase.